Consider the following 46-residue polypeptide: Mu-hexatoxin-Mg2a (46 aa).

5 disulfides stabilise this stretch: C3-C18, C10-C24, C17-C36, C21-C43, and C26-C34.

The protein belongs to the neurotoxin 02 (plectoxin) family. 02 (plectoxin) subfamily. Expressed by the venom gland.

It localises to the secreted. In terms of biological role, competes for binding at site 3 of the insect voltage-gated sodium channel (Nav). Insecticidal neurotoxin. Causes temporary paralysis to lepidopteran larvae (10.3 nmol/g) or to crickets (doses from 0.93 to 119 ug/g). Is not toxic to mice when injected intracranially (high doses). This Macrothele gigas (Japanese funnel web spider) protein is Mu-hexatoxin-Mg2a.